The chain runs to 525 residues: Mitochondrial-processing peptidase subunit alpha (525 aa).

Residues 1-33 (MAAVVLAATRLLRGSGSWGCSRLRFGPPAYRRF) constitute a mitochondrion transit peptide. Lysine 64 carries the post-translational modification N6-succinyllysine. Lysine 299 carries the post-translational modification N6-acetyllysine.

It belongs to the peptidase M16 family. As to quaternary structure, heterodimer of PMPCA (alpha) and PMPCB (beta) subunits, forming the mitochondrial processing protease (MPP) in which PMPCA is involved in substrate recognition and binding and PMPCB is the catalytic subunit.

It is found in the mitochondrion matrix. Its subcellular location is the mitochondrion inner membrane. Its function is as follows. Substrate recognition and binding subunit of the essential mitochondrial processing protease (MPP), which cleaves the mitochondrial sequence off newly imported precursors proteins. The sequence is that of Mitochondrial-processing peptidase subunit alpha (PMPCA) from Pongo abelii (Sumatran orangutan).